Consider the following 1192-residue polypeptide: DNA topoisomerase 2 (1192 aa).

Residues Asn64, Asn95, and 142–149 each bind ATP; that span reads GTNGVGLK. Positions 438, 539, and 541 each coordinate Mg(2+). Residues 707–1174 enclose the Topo IIA-type catalytic domain; it reads IPNFLDGMTR…PGASVWLEEI (468 aa). Catalysis depends on Tyr800, which acts as the O-(5'-phospho-DNA)-tyrosine intermediate.

It belongs to the type II topoisomerase family. It depends on Mg(2+) as a cofactor. Mn(2+) serves as cofactor. The cofactor is Ca(2+).

The protein resides in the host cytoplasm. It carries out the reaction ATP-dependent breakage, passage and rejoining of double-stranded DNA.. In terms of biological role, type II topoisomerase. Processively relaxes supercoiled DNA. Displays DNA-supercoiling activity only when associated with the viral histone-like protein. The protein is DNA topoisomerase 2 (TOP) of African swine fever virus (strain Badajoz 1971 Vero-adapted) (Ba71V).